Reading from the N-terminus, the 366-residue chain is tRNA(Met) cytidine acetate ligase (366 aa).

ATP-binding positions include 7-20 (IAEF…HKYL), G96, N152, and R175.

Belongs to the TmcAL family.

It is found in the cytoplasm. It catalyses the reaction cytidine(34) in elongator tRNA(Met) + acetate + ATP = N(4)-acetylcytidine(34) in elongator tRNA(Met) + AMP + diphosphate. Its function is as follows. Catalyzes the formation of N(4)-acetylcytidine (ac(4)C) at the wobble position of elongator tRNA(Met), using acetate and ATP as substrates. First activates an acetate ion to form acetyladenylate (Ac-AMP) and then transfers the acetyl group to tRNA to form ac(4)C34. The protein is tRNA(Met) cytidine acetate ligase of Streptococcus mutans serotype c (strain ATCC 700610 / UA159).